The following is a 267-amino-acid chain: Endonuclease NucS (267 aa).

Belongs to the NucS endonuclease family.

The protein localises to the cytoplasm. Its function is as follows. Cleaves both 3' and 5' ssDNA extremities of branched DNA structures. The chain is Endonuclease NucS from Pyrococcus furiosus (strain ATCC 43587 / DSM 3638 / JCM 8422 / Vc1).